Consider the following 319-residue polypeptide: tRNA dimethylallyltransferase (319 aa).

ATP is bound at residue glycine 10–threonine 17. A substrate-binding site is contributed by threonine 12–threonine 17. The tract at residues aspartate 35–glutamine 38 is interaction with substrate tRNA.

Belongs to the IPP transferase family. As to quaternary structure, monomer. Mg(2+) is required as a cofactor.

The enzyme catalyses adenosine(37) in tRNA + dimethylallyl diphosphate = N(6)-dimethylallyladenosine(37) in tRNA + diphosphate. Its function is as follows. Catalyzes the transfer of a dimethylallyl group onto the adenine at position 37 in tRNAs that read codons beginning with uridine, leading to the formation of N6-(dimethylallyl)adenosine (i(6)A). This Symbiobacterium thermophilum (strain DSM 24528 / JCM 14929 / IAM 14863 / T) protein is tRNA dimethylallyltransferase.